We begin with the raw amino-acid sequence, 189 residues long: Ribosome maturation factor RimM (189 aa).

The region spanning 95–177 (EDDEFYYADL…AGLVDDPEEL (83 aa)) is the PRC barrel domain.

It belongs to the RimM family. As to quaternary structure, binds ribosomal protein uS19.

It localises to the cytoplasm. An accessory protein needed during the final step in the assembly of 30S ribosomal subunit, possibly for assembly of the head region. Essential for efficient processing of 16S rRNA. May be needed both before and after RbfA during the maturation of 16S rRNA. It has affinity for free ribosomal 30S subunits but not for 70S ribosomes. The sequence is that of Ribosome maturation factor RimM from Rhizobium leguminosarum bv. trifolii (strain WSM2304).